Here is a 375-residue protein sequence, read N- to C-terminus: Transcription factor E2F4 (375 aa).

Residues 12–81 (SRHEKSLGLL…KNSIQWKGVG (70 aa)) mediate DNA binding. Residues 39–61 (LKAAADTLAVRQKRRIYDITNVL) are leucine-zipper. Residues 44–81 (DTLAVRQKRRIYDITNVLEGIGLIEKKSKNSIQWKGVG) carry the DEF box motif. The segment at 82–177 (PGCNTREIAD…NTNGQKKFQI (96 aa)) is dimerization. Residues 197-300 (SSAPVVVPVP…PDPSTSFQPI (104 aa)) are disordered. Positions 220-270 (STPQRPALTPQNDIATSPAPTVPHSTISNAESQDCPTGQTFSMENTTSSRL) are enriched in polar residues. The span at 280 to 296 (SSASLDNSNDSPDPSTS) shows a compositional bias: low complexity. Residues 299–375 (PIKSDLSDVL…CDLFDVPINL (77 aa)) are transactivation.

This sequence belongs to the E2F/DP family. As to quaternary structure, component of the drtf1/e2f transcription factor complex. Component of the EDM complex, at least composed of e2f4, e2f5, mcidas and tfdp1.

Its subcellular location is the nucleus. Transcription activator that binds DNA cooperatively with DP proteins through the E2 recognition site, 5'-TTTC[CG]CGC-3' found in the promoter region of a number of genes. Component of the EDM complex, a complex specifically required for multiciliate cell differentiation: the EDM complex binds and activate genes required for centriole biogenesis. Activates genes required for centriole assembly (plk4, cep152) and genes specifically required for motile cilia formation (foxj1). Also promotes the deuterosome pathway of centriole biogenesis by activating expression of deup1, but not its paralog cep63. This chain is Transcription factor E2F4, found in Xenopus laevis (African clawed frog).